The following is a 203-amino-acid chain: Mpv17-like protein (203 aa).

Topologically, residues 1–12 (MRILIQFTKRHP) are cytoplasmic. The chain crosses the membrane as a helical span at residues 13–30 (WLTNVTIYGSLFASADIV). Over 31–49 (QQKLSKSPTEPIDFKQTAK) the chain is Lumenal. The helical transmembrane segment at 50 to 69 (VGLVGFCFHANFNFFWLRFI) threads the bilayer. The Cytoplasmic segment spans residues 70 to 89 (ERTFPGSAPLNVIRKVACDQ). A helical membrane pass occupies residues 90-107 (LMAAPITISAFYTGLSLL). The Lumenal segment spans residues 108-143 (DGERDVFKNLKEKFWPTYKTGVMCWTVFQTINFSVI). The chain crosses the membrane as a helical span at residues 144-166 (PPFVRTAYIGVCAFLWTTFLCYI). At 167-203 (RNRDINEVTTRLLHAVPNIRGKMAFPQDQDDNKPADK) the chain is on the cytoplasmic side.

The protein belongs to the peroxisomal membrane protein PXMP2/4 family.

It is found in the peroxisome membrane. Participates in reactive oxygen species metabolism by up- or down-regulation of the genes of antioxidant enzymes. Protective against the mitochondrial apoptotic cascade. This Xenopus laevis (African clawed frog) protein is Mpv17-like protein (mpv17l).